A 577-amino-acid polypeptide reads, in one-letter code: 5'-AMP-activated protein kinase subunit gamma (577 aa).

A disordered region spans residues Q45–N226. Residues N58–N88 are compositionally biased toward low complexity. 2 stretches are compositionally biased toward polar residues: residues S106 to G121 and E138 to M155. A compositionally biased stretch (low complexity) spans S165–N226. 4 CBS domains span residues V279–K341, E364–E426, I438–S499, and Q517–S574.

The protein belongs to the 5'-AMP-activated protein kinase gamma subunit family.

AMPK may be responsible for the regulation of fatty acid synthesis by phosphorylation of acetyl-CoA carboxylase. The sequence is that of 5'-AMP-activated protein kinase subunit gamma (prkag) from Dictyostelium discoideum (Social amoeba).